The following is a 62-amino-acid chain: Conotoxin Pl168 (62 aa).

A signal peptide spans 1–21; it reads MGMRMMFTVFLLVVLATTVVS. Positions 22–40 are excised as a propeptide; sequence FTLDRASDGANAAADLVAR. Disulfide bonds link Cys46-Cys52 and Cys47-Cys61.

It belongs to the conotoxin A superfamily. In terms of processing, both Pro-53 and Pro-62 are not in cis/trans isomerization. In terms of tissue distribution, expressed by the venom duct.

The protein resides in the secreted. In terms of biological role, probable neurotoxin with unknown target. Possibly targets ion channels. This chain is Conotoxin Pl168, found in Conus planorbis (Planorbis cone).